Consider the following 598-residue polypeptide: Arginine--tRNA ligase (598 aa).

The 'HIGH' region signature appears at 139–149 (ANPTGPMHVGH).

The protein belongs to the class-I aminoacyl-tRNA synthetase family. As to quaternary structure, monomer.

It is found in the cytoplasm. It carries out the reaction tRNA(Arg) + L-arginine + ATP = L-arginyl-tRNA(Arg) + AMP + diphosphate. This is Arginine--tRNA ligase from Bradyrhizobium sp. (strain ORS 278).